Reading from the N-terminus, the 245-residue chain is uncharacterized protein (245 aa).

The signal sequence occupies residues 1 to 20 (MIKQTIVALLLSVGASSVFA).

It to E.coli YmcB.

This is an uncharacterized protein from Escherichia coli (strain K12).